We begin with the raw amino-acid sequence, 699 residues long: Chitinase A1 (699 aa).

The first 41 residues, 1–41 (MINLNKHTAFKKTAKFFLGLSLLLSVIVPSFALQPATAEAA), serve as a signal peptide directing secretion. Residues 44–454 (YKIVGYYPSW…NKLKADLPTG (411 aa)) enclose the GH18 domain. Residues 135 to 136 (DQ) and 162 to 165 (GGWT) contribute to the chitin site. Residue Glu204 is the Proton donor of the active site. Chitin is bound by residues Tyr205, 277-280 (MTYD), and Trp433. The disordered stretch occupies residues 449 to 471 (ADLPTGGTVPPVDTTAPSVPGNA). Over residues 452 to 465 (PTGGTVPPVDTTAP) the composition is skewed to low complexity. Fibronectin type-III domains lie at 467-553 (VPGN…TAQP) and 562-647 (APTN…TAAE).

This sequence belongs to the glycosyl hydrolase 18 family. Chitinase class II subfamily.

It catalyses the reaction Random endo-hydrolysis of N-acetyl-beta-D-glucosaminide (1-&gt;4)-beta-linkages in chitin and chitodextrins.. The protein is Chitinase A1 (chiA1) of Niallia circulans (Bacillus circulans).